We begin with the raw amino-acid sequence, 256 residues long: 5-keto-4-deoxy-D-glucarate aldolase (256 aa).

Histidine 50 serves as the catalytic Proton acceptor. Substrate is bound at residue glutamine 151. Residue glutamate 153 participates in Mg(2+) binding. Serine 178 and aspartate 179 together coordinate substrate. Residue aspartate 179 coordinates Mg(2+).

The protein belongs to the HpcH/HpaI aldolase family. KDGluc aldolase subfamily. In terms of assembly, homohexamer; trimer of dimers. Mg(2+) is required as a cofactor.

It catalyses the reaction 5-dehydro-4-deoxy-D-glucarate = 2-hydroxy-3-oxopropanoate + pyruvate. The enzyme catalyses 2-dehydro-3-deoxy-D-glucarate = 2-hydroxy-3-oxopropanoate + pyruvate. The protein operates within carbohydrate acid metabolism; galactarate degradation; D-glycerate from galactarate: step 2/3. Catalyzes the reversible retro-aldol cleavage of both 5-keto-4-deoxy-D-glucarate and 2-keto-3-deoxy-D-glucarate to pyruvate and tartronic semialdehyde. This is 5-keto-4-deoxy-D-glucarate aldolase from Shigella dysenteriae serotype 1 (strain Sd197).